A 239-amino-acid chain; its full sequence is Small ribosomal subunit protein uS3c (239 aa).

Positions 43–139 (IKNYIQKNRK…RLNIGIEKVK (97 aa)) constitute a KH type-2 domain.

The protein belongs to the universal ribosomal protein uS3 family. As to quaternary structure, part of the 30S ribosomal subunit.

It localises to the plastid. The protein resides in the chloroplast. The sequence is that of Small ribosomal subunit protein uS3c (rps3) from Oryza nivara (Indian wild rice).